A 102-amino-acid polypeptide reads, in one-letter code: uncharacterized protein (102 aa).

2 helical membrane passes run 28 to 48 and 81 to 101; these read YLNLLLILEAILCPVDSLISI and LSVLYLDLCCSGLIIAEAGIG.

The protein localises to the membrane. This is an uncharacterized protein from Saccharomyces cerevisiae (strain ATCC 204508 / S288c) (Baker's yeast).